The chain runs to 105 residues: Flagellar transcriptional regulator FlhD (105 aa).

The protein belongs to the FlhD family. Homodimer; disulfide-linked. Forms a heterohexamer composed of two FlhC and four FlhD subunits. Each FlhC binds a FlhD dimer, forming a heterotrimer, and a hexamer assembles by dimerization of two heterotrimers.

It is found in the cytoplasm. Its function is as follows. Functions in complex with FlhC as a master transcriptional regulator that regulates transcription of several flagellar and non-flagellar operons by binding to their promoter region. Activates expression of class 2 flagellar genes, including fliA, which is a flagellum-specific sigma factor that turns on the class 3 genes. Also regulates genes whose products function in a variety of physiological pathways. The chain is Flagellar transcriptional regulator FlhD from Nitrosomonas eutropha (strain DSM 101675 / C91 / Nm57).